Consider the following 199-residue polypeptide: 3-hexulose-6-phosphate isomerase (199 aa).

Residues 44–186 (LARQIVQPGR…FQSLWDHTEV (143 aa)) form the SIS domain. Substrate contacts are provided by residues serine 62 and 101–106 (SGSGTT). Glutamate 166 acts as the Proton acceptor in catalysis.

The protein belongs to the SIS family. PHI subfamily.

The enzyme catalyses D-arabino-hex-3-ulose 6-phosphate = beta-D-fructose 6-phosphate. It functions in the pathway one-carbon metabolism; formaldehyde assimilation via RuMP pathway; D-fructose 6-phosphate from D-ribulose 5-phosphate and formaldehyde: step 2/2. Functionally, catalyzes the isomerization between 3-hexulose 6-phosphate and fructose 6-phosphate. This chain is 3-hexulose-6-phosphate isomerase (rmpB), found in Mycobacterium gastri.